A 242-amino-acid polypeptide reads, in one-letter code: Protein HTATIP2 (242 aa).

A2 carries the N-acetylalanine modification. Residues 2-25 form a required for interaction with elongation factor EEF1A1 region; sequence AETEALSKLREDFRMQNKSVFILG. The NADPH site is built by S27, G28, E29, T30, R52, R53, L92, G93, Y143, K147, L170, and R178. Y143 (proton acceptor) is an active-site residue. The active site involves K147.

Monomer. Forms homodimers during oxidative stress. Interacts (via N-terminus) with elongation factor EEF1A1 (via middle-region); the interaction is direct and competes with EEF1A1 binding to guanyl-nucleotide exchange factor EEF1B2, thereby inhibiting GDP for GTP exchange and reactivation of EEF1A1. Interacts with nuclear transport receptors XPO4, IPO5/RANBP5, IPO7, IPO9 and KPNB1 as well as GCN1L1/GCN1 and LRPPRC probably through their HEAT repeats. Binds NCOA5/CIA.

The protein resides in the cytoplasm. Functionally, represses translation by preventing reactivation of elongation factor eEF1A. May also inhibit nuclear import by competing with nuclear import substrates for binding to a subset of nuclear transport receptors. Has additionally been proposed to act as a redox sensor involved in cellular oxidative stress surveillance. This chain is Protein HTATIP2 (HTATIP2), found in Gorilla gorilla gorilla (Western lowland gorilla).